We begin with the raw amino-acid sequence, 123 residues long: Galanin peptides (123 aa).

The N-terminal stretch at 1 to 19 (MARGSALLLASLLLAAALS) is a signal peptide. Positions 20–30 (ASAGLWSPAKE) are excised as a propeptide. The segment at 46-80 (HAVGNHRSFSDKNGLTSKRELRPEDDMKPGSFDRS) is disordered. Residues 62-73 (SKRELRPEDDMK) are compositionally biased toward basic and acidic residues. Ser116 and Ser117 each carry phosphoserine.

Belongs to the galanin family.

The protein resides in the secreted. Endocrine hormone of the central and peripheral nervous systems that binds and activates the G protein-coupled receptors GALR1, GALR2, and GALR3. This small neuropeptide may regulate diverse physiologic functions including contraction of smooth muscle of the gastrointestinal and genitourinary tract, growth hormone and insulin release and adrenal secretion. This chain is Galanin peptides (GAL), found in Homo sapiens (Human).